Here is a 297-residue protein sequence, read N- to C-terminus: Small ribosomal subunit biogenesis GTPase RsgA (297 aa).

One can recognise a CP-type G domain in the interval 65–223; the sequence is RNELVRPPVA…VADTPGFSAI (159 aa). GTP is bound by residues 114-117 and 166-174; these read TKVD and GQSGAGKST. Cys247, Cys252, His254, and Cys260 together coordinate Zn(2+).

The protein belongs to the TRAFAC class YlqF/YawG GTPase family. RsgA subfamily. As to quaternary structure, monomer. Associates with 30S ribosomal subunit, binds 16S rRNA. It depends on Zn(2+) as a cofactor.

It localises to the cytoplasm. Its function is as follows. One of several proteins that assist in the late maturation steps of the functional core of the 30S ribosomal subunit. Helps release RbfA from mature subunits. May play a role in the assembly of ribosomal proteins into the subunit. Circularly permuted GTPase that catalyzes slow GTP hydrolysis, GTPase activity is stimulated by the 30S ribosomal subunit. The chain is Small ribosomal subunit biogenesis GTPase RsgA from Enterococcus faecalis (strain ATCC 700802 / V583).